Here is a 250-residue protein sequence, read N- to C-terminus: Probable E3 ubiquitin-protein ligase RHY1A (250 aa).

Residues 1–10 show a composition bias toward polar residues; sequence MTSASELFST. The interval 1 to 106 is disordered; that stretch reads MTSASELFST…ETQSSSFVNL (106 aa). Basic residues predominate over residues 29–47; it reads YRHHSHHHHRRHGVHHHNQ. The segment covering 48-58 has biased composition (basic and acidic residues); it reads RHDSDGCDPLR. Residues 60–69 are compositionally biased toward basic residues; the sequence is PTPRLRRFFH. A compositionally biased stretch (basic and acidic residues) spans 71-80; that stretch reads PIQERSRPIR. Over residues 91 to 102 the composition is skewed to low complexity; it reads TDSTDTETQSSS. Residues 203-244 form an RING-type; atypical zinc finger; the sequence is CSICLESFTKGDMLISLPCTHSFHSSCLNPWLRACGDCPCCR.

The catalysed reaction is S-ubiquitinyl-[E2 ubiquitin-conjugating enzyme]-L-cysteine + [acceptor protein]-L-lysine = [E2 ubiquitin-conjugating enzyme]-L-cysteine + N(6)-ubiquitinyl-[acceptor protein]-L-lysine.. Its pathway is protein modification; protein ubiquitination. Probable E3 ubiquitin-protein ligase that may possess E3 ubiquitin ligase activity in vitro. This is Probable E3 ubiquitin-protein ligase RHY1A from Arabidopsis thaliana (Mouse-ear cress).